The sequence spans 456 residues: Bifunctional protein GlmU (456 aa).

The segment at 1-229 (MLNNAMSVVI…LSEVEGVNNR (229 aa)) is pyrophosphorylase. Residues 11-14 (LAAG), Lys25, Gln76, 81-82 (GT), 103-105 (YGD), Gly140, Glu154, Asn169, and Asn227 contribute to the UDP-N-acetyl-alpha-D-glucosamine site. Asp105 serves as a coordination point for Mg(2+). Mg(2+) is bound at residue Asn227. The interval 230-250 (LQLSRLERVYQSEQAEKLLLA) is linker. An N-acetyltransferase region spans residues 251–456 (GVMLRDPARF…EGWRRPVKKK (206 aa)). UDP-N-acetyl-alpha-D-glucosamine is bound by residues Arg333 and Lys351. His363 functions as the Proton acceptor in the catalytic mechanism. Tyr366 and Asn377 together coordinate UDP-N-acetyl-alpha-D-glucosamine. Acetyl-CoA-binding positions include Ala380, 386–387 (NY), Ser405, Ala423, and Arg440.

The protein in the N-terminal section; belongs to the N-acetylglucosamine-1-phosphate uridyltransferase family. In the C-terminal section; belongs to the transferase hexapeptide repeat family. As to quaternary structure, homotrimer. Requires Mg(2+) as cofactor.

Its subcellular location is the cytoplasm. It catalyses the reaction alpha-D-glucosamine 1-phosphate + acetyl-CoA = N-acetyl-alpha-D-glucosamine 1-phosphate + CoA + H(+). The catalysed reaction is N-acetyl-alpha-D-glucosamine 1-phosphate + UTP + H(+) = UDP-N-acetyl-alpha-D-glucosamine + diphosphate. It functions in the pathway nucleotide-sugar biosynthesis; UDP-N-acetyl-alpha-D-glucosamine biosynthesis; N-acetyl-alpha-D-glucosamine 1-phosphate from alpha-D-glucosamine 6-phosphate (route II): step 2/2. It participates in nucleotide-sugar biosynthesis; UDP-N-acetyl-alpha-D-glucosamine biosynthesis; UDP-N-acetyl-alpha-D-glucosamine from N-acetyl-alpha-D-glucosamine 1-phosphate: step 1/1. The protein operates within bacterial outer membrane biogenesis; LPS lipid A biosynthesis. Functionally, catalyzes the last two sequential reactions in the de novo biosynthetic pathway for UDP-N-acetylglucosamine (UDP-GlcNAc). The C-terminal domain catalyzes the transfer of acetyl group from acetyl coenzyme A to glucosamine-1-phosphate (GlcN-1-P) to produce N-acetylglucosamine-1-phosphate (GlcNAc-1-P), which is converted into UDP-GlcNAc by the transfer of uridine 5-monophosphate (from uridine 5-triphosphate), a reaction catalyzed by the N-terminal domain. This chain is Bifunctional protein GlmU, found in Shigella boydii serotype 18 (strain CDC 3083-94 / BS512).